The sequence spans 299 residues: B3 domain-containing transcription factor NGA2 (299 aa).

Positions 1 to 21 (MNQEDKEKPIEEASSSMEREH) are disordered. The segment at residues 23-129 (FDKVVTPSDV…KLYIDWRRRP (107 aa)) is a DNA-binding region (TF-B3). Positions 226 to 249 (GGGGSVNSTEEESSSSGGSIPRGR) are disordered.

Its subcellular location is the nucleus. Regulates lateral organ growth. Functionally redundant with NGA1, NGA3 and NGA4. The sequence is that of B3 domain-containing transcription factor NGA2 (NGA2) from Arabidopsis thaliana (Mouse-ear cress).